The chain runs to 347 residues: N-acetyl-gamma-glutamyl-phosphate reductase (347 aa).

The active site involves Cys-152.

It belongs to the NAGSA dehydrogenase family. Type 1 subfamily.

It is found in the cytoplasm. The enzyme catalyses N-acetyl-L-glutamate 5-semialdehyde + phosphate + NADP(+) = N-acetyl-L-glutamyl 5-phosphate + NADPH + H(+). The protein operates within amino-acid biosynthesis; L-arginine biosynthesis; N(2)-acetyl-L-ornithine from L-glutamate: step 3/4. Catalyzes the NADPH-dependent reduction of N-acetyl-5-glutamyl phosphate to yield N-acetyl-L-glutamate 5-semialdehyde. The chain is N-acetyl-gamma-glutamyl-phosphate reductase from Neisseria meningitidis serogroup A / serotype 4A (strain DSM 15465 / Z2491).